A 1170-amino-acid chain; its full sequence is Type I restriction enzyme EcoKI endonuclease subunit (1170 aa).

A coiled-coil region spans residues 143 to 229; it reads YHQEVLTLKQ…QERKAYHKEI (87 aa). The segment at residues 431-450 is a DNA-binding region (H-T-H motif); sequence NQWFADNPGMSELGLRYYQE. One can recognise a Helicase ATP-binding domain in the interval 458 to 639; it reads KAIVKGQQEI…GEPVYRYTYR (182 aa). ATP is bound at residue 472–478; sequence ATGTGKT. Residues 574–577 carry the DEAH box motif; the sequence is DEAH. Residues 714–879 enclose the Helicase C-terminal domain; it reads ELTNYLDPTG…TLVNEITDSE (166 aa).

Belongs to the HsdR family. The type I restriction/modification system is composed of three polypeptides R, M and S. The restriction enzyme has stoichiometry R(2)M(2)S(1). The methyltransferase is composed of M(2)S(1). As to quaternary structure, (Microbial infection) Interacts with Escherichia phage T7 protein Ocr; this interaction leads to the inhibition of the type I bifunctional endonuclease and methyltransferase restriction enzyme R.EcoKI composed of R(2)M(2)S(1). Post-translationally, upon purification after overexpression about one-third has the initiating methionine removed.

The catalysed reaction is Endonucleolytic cleavage of DNA to give random double-stranded fragments with terminal 5'-phosphates, ATP is simultaneously hydrolyzed.. Its function is as follows. The subtype A restriction (R) subunit of a type I restriction enzyme that recognizes 5'-AACN(6)GTGC-3' and cleaves a random distance away. The R subunit is required for both endonuclease and ATPase activities but not for modification. Has endonucleolytic activity that requires Mg(2+), ATP and S-adenosyl-L-methionine (SAM); ATP can be replaced by dATP, no tested molecule could substitute for SAM. Generates double-stranded DNA with no nicks, by cutting one strand then the other within a few seconds. Cleaves only non-methylated DNA, hemi-methylated and fully methylated DNA are not substrates. After locating a non-methylated recognition site, the enzyme complex serves as a molecular motor that translocates DNA in an ATP-dependent manner until a collision occurs that triggers cleavage. The protein is Type I restriction enzyme EcoKI endonuclease subunit of Escherichia coli (strain K12).